A 127-amino-acid polypeptide reads, in one-letter code: MPTINQLVRKGRKQVIKKSKSPALVSCPQRRGVCTRVYTTTPKKPNSALRKVAKVRLTSGYEVISYIPGEGHNLQEHSIVLVRGGRVKDLPGVKYHIVRGALDTAGVKGRVHSRSKYGTKKADAGKK.

A 3-methylthioaspartic acid modification is found at D89.

It belongs to the universal ribosomal protein uS12 family. In terms of assembly, part of the 30S ribosomal subunit. Contacts proteins S8 and S17. May interact with IF1 in the 30S initiation complex.

Its function is as follows. With S4 and S5 plays an important role in translational accuracy. In terms of biological role, interacts with and stabilizes bases of the 16S rRNA that are involved in tRNA selection in the A site and with the mRNA backbone. Located at the interface of the 30S and 50S subunits, it traverses the body of the 30S subunit contacting proteins on the other side and probably holding the rRNA structure together. The combined cluster of proteins S8, S12 and S17 appears to hold together the shoulder and platform of the 30S subunit. The polypeptide is Small ribosomal subunit protein uS12 (Nautilia profundicola (strain ATCC BAA-1463 / DSM 18972 / AmH)).